The following is a 495-amino-acid chain: N-succinylglutamate 5-semialdehyde dehydrogenase (495 aa).

228-233 (GSYATG) contacts NAD(+). Residues E251 and C285 contribute to the active site.

Belongs to the aldehyde dehydrogenase family. AstD subfamily.

The catalysed reaction is N-succinyl-L-glutamate 5-semialdehyde + NAD(+) + H2O = N-succinyl-L-glutamate + NADH + 2 H(+). It functions in the pathway amino-acid degradation; L-arginine degradation via AST pathway; L-glutamate and succinate from L-arginine: step 4/5. Its function is as follows. Catalyzes the NAD-dependent reduction of succinylglutamate semialdehyde into succinylglutamate. This is N-succinylglutamate 5-semialdehyde dehydrogenase from Legionella pneumophila (strain Corby).